The sequence spans 447 residues: Hemopexin (447 aa).

An N-terminal signal peptide occupies residues 1 to 18 (MRLIQALSLCLALSLSLA). The interval 20–44 (PPQHKEDHSHKGKPGGEGHKHELHH) is disordered. The span at 22–44 (QHKEDHSHKGKPGGEGHKHELHH) shows a compositional bias: basic and acidic residues. Hemopexin repeat units lie at residues 53 to 93 (GIEF…FPEL), 99 to 151 (LGHV…FPGI), 152 to 197 (PDHL…FKSM), 198 to 243 (PNCT…FMRC), 262 to 304 (RVHL…FKEL), 305 to 351 (HSEV…VLGI), 352 to 395 (EGPV…TITQ), and 396 to 441 (FKRI…VSQQ). An N-linked (GlcNAc...) asparagine glycan is attached at N87. N-linked (GlcNAc...) asparagine glycosylation is found at N168 and N199. H293 is a heme binding site.

This sequence belongs to the hemopexin family.

The protein resides in the secreted. Functionally, binds heme and transports it to the liver for breakdown and iron recovery, after which the free hemopexin returns to the circulation. This is Hemopexin from Danio rerio (Zebrafish).